Consider the following 446-residue polypeptide: Golgi reassembly-stacking protein 1 (446 aa).

Residues 1–20 (MGLGASSEQPAGGEGFHLHG) form a disordered region. Gly2 is lipidated: N-myristoyl glycine. 2 consecutive PDZ GRASP-type domains span residues 14 to 104 (EGFH…FCSF) and 110 to 198 (HVWH…YGYL). Residues 14–214 (EGFHLHGVQE…PSSQHKKPPG (201 aa)) are GRASP. Residues His17, His19, and Cys102 each coordinate Zn(2+). The essential for interaction with GOLGA2/GM130 stretch occupies residues 189–201 (LGCGIGYGYLHRI). Disordered regions lie at residues 202 to 252 (PTQP…LGSR) and 343 to 446 (VSGP…EPGL). Phosphothreonine occurs at positions 216, 220, and 224. Residues 343-354 (VSGPEDIGSSSS) show a composition bias toward low complexity. 3 positions are modified to phosphoserine: Ser365, Ser367, and Ser376.

The protein belongs to the GORASP family. As to quaternary structure, homodimer. Forms higher-order oligomers under interphase but not mitotic conditions. Dimers of the protein on one membrane might be able to interact with dimers on another and so stack cisternae. Interacts with the C-terminus of GOLGA2/GM130 under both mitotic and non-mitotic conditions. The interaction is critical for the correct targeting of both proteins to the cis-Golgi. Interacts with TMED2 and TMED3. Post-translationally, phosphorylated by CDC2/B1 and PLK kinases during mitosis. Phosphorylation cycle correlates with the cisternal stacking cycle. Phosphorylation of the homodimer prevents the association of dimers into higher-order oligomers, leading to cisternal unstacking. In terms of processing, target for caspase-3 cleavage during apoptosis. The cleavage contributes to Golgi fragmentation and occurs very early in the execution phase of apoptosis. Myristoylated.

Its subcellular location is the golgi apparatus. The protein localises to the cis-Golgi network membrane. Key structural protein of the Golgi apparatus. The membrane cisternae of the Golgi apparatus adhere to each other to form stacks, which are aligned side by side to form the Golgi ribbon. Acting in concert with GORASP2/GRASP55, is required for the formation and maintenance of the Golgi ribbon, and may be dispensable for the formation of stacks. However, other studies suggest that GORASP1 plays an important role in assembly and membrane stacking of the cisternae, and in the reassembly of Golgi stacks after breakdown during mitosis. Caspase-mediated cleavage of GORASP1 is required for fragmentation of the Golgi during apoptosis. Also mediates, via its interaction with GOLGA2/GM130, the docking of transport vesicles with the Golgi membranes. Mediates ER stress-induced unconventional (ER/Golgi-independent) trafficking of core-glycosylated CFTR to cell membrane. This is Golgi reassembly-stacking protein 1 (Gorasp1) from Mus musculus (Mouse).